We begin with the raw amino-acid sequence, 56 residues long: Serine protease inhibitor Kazal-type 1 (56 aa).

The Kazal-like domain occupies 3–56; it reads PQREATCTSEVSGCPKIYNPVCGTDGITYSNECVLCSENKKRQTPVLIQKSGPC. Disulfide bonds link Cys-9–Cys-38, Cys-16–Cys-35, and Cys-24–Cys-56.

The protein resides in the secreted. Serine protease inhibitor which exhibits anti-trypsin activity. In the pancreas, protects against trypsin-catalyzed premature activation of zymogens. Its function is as follows. In the male reproductive tract, binds to sperm heads where it modulates sperm capacitance by inhibiting calcium uptake and nitrogen oxide (NO) production. This is Serine protease inhibitor Kazal-type 1 (SPINK1) from Sus scrofa (Pig).